The following is a 171-amino-acid chain: Ribosome maturation factor RimM (171 aa).

Residues 96-168 (EDGFYDHELE…TATITPPEGL (73 aa)) enclose the PRC barrel domain.

This sequence belongs to the RimM family. As to quaternary structure, binds ribosomal protein uS19.

The protein resides in the cytoplasm. Its function is as follows. An accessory protein needed during the final step in the assembly of 30S ribosomal subunit, possibly for assembly of the head region. Essential for efficient processing of 16S rRNA. May be needed both before and after RbfA during the maturation of 16S rRNA. It has affinity for free ribosomal 30S subunits but not for 70S ribosomes. In Corynebacterium glutamicum (strain R), this protein is Ribosome maturation factor RimM.